Here is a 492-residue protein sequence, read N- to C-terminus: Thyroid hormone receptor alpha (492 aa).

The segment at methionine 1–cysteine 33 is disordered. The tract at residues methionine 1 to glutamine 52 is modulating. Residues cysteine 53, cysteine 56, cysteine 70, cysteine 73, cysteine 91, cysteine 97, cysteine 107, and cysteine 110 each coordinate Zn(2+). 2 consecutive NR C4-type zinc fingers follow at residues cysteine 53–cysteine 73 and cysteine 91–cysteine 115. Positions cysteine 53–aspartate 127 form a DNA-binding region, nuclear receptor. Residues glutamate 163–valine 407 enclose the NR LBD domain. Positions 228 and 277 each coordinate 3,3',5-triiodo-L-thyronine. The interval alanine 457–proline 492 is disordered.

The protein belongs to the nuclear hormone receptor family. NR1 subfamily. As to quaternary structure, binds DNA as a dimer; homodimer and heterodimer with RXRB. Interacts with NCOA3 and NCOA6 coactivators, leading to a strong increase of transcription of target genes. Probably interacts with SFPQ. Interacts with C1D. Interacts with AKAP13. Interacts with TP53INP2. Interacts with PER2. Isoform alpha-2 and isoform alpha-1 interact with TACC1, but the interaction with alpha-1 is weaker. The interaction with isoform alpha-1, but not alpha-2, is decreased in the presence of thyroid hormone T3.

It localises to the nucleus. Its subcellular location is the cytoplasm. Functionally, nuclear hormone receptor that can act as a repressor or activator of transcription. High affinity receptor for thyroid hormones, including triiodothyronine and thyroxine. The polypeptide is Thyroid hormone receptor alpha (Thra) (Rattus norvegicus (Rat)).